Consider the following 909-residue polypeptide: Villin-1 (909 aa).

Gelsolin-like repeat units lie at residues 29 to 79, 149 to 189, 262 to 305, 391 to 448, 529 to 569, and 631 to 672; these read KQLI…VDSI, VRVK…QEKA, GNLH…TERK, LKVW…QDRA, MQAI…SDHE, and LKVK…KSKE. Disordered stretches follow at residues 733 to 781 and 816 to 835; these read SLKG…CSSE and DGVARQESSSKSDISKQKPR. Over residues 752–762 the composition is skewed to basic and acidic residues; that stretch reads QSKDNASRDLQ. Serine 780 carries the phosphoserine modification. In terms of domain architecture, HP spans 844-909; the sequence is SLESLAYSYE…NKLKISLHLF (66 aa).

Belongs to the villin/gelsolin family. As to expression, expressed in all tissues examined. Mainly detected in the vascular tissue and the pericycle of roots and in the vasculature of leaves. Not expressed in the root cap.

The protein localises to the cytoplasm. Its subcellular location is the cytoskeleton. Functionally, binds actin and actin filament bundles in a Ca(2+)/calmodulin-insensitive manner, but is unable to sever, cap, and nucleate actin filament formation in vitro. Does not protect individual filaments from severing by VLN3 (AC O81645). In Arabidopsis thaliana (Mouse-ear cress), this protein is Villin-1.